The primary structure comprises 971 residues: Endoplasmic reticulum calcium ATPase srcA (971 aa).

The Cytoplasmic segment spans residues 1–25; it reads MNNEALAEDPPTPLWELVLEQFKDQ. The chain crosses the membrane as a helical span at residues 26–46; it reads LVLILLGSAAVSFVLALFEEG. Residues 47 to 49 are Lumenal-facing; that stretch reads DDW. Residues 50–70 traverse the membrane as a helical segment; it reads TAFVDPVVILTILILNAVVGV. Topologically, residues 71-217 are cytoplasmic; that stretch reads TQESSAEKAI…PTPLKQKLND (147 aa). The helical transmembrane segment at 218 to 238 threads the bilayer; the sequence is FGDMLAKVITVICVLVWLINV. At 239–262 the chain is on the lumenal side; that stretch reads EHFNDPAHGGWAKGAIYYLKIAVS. Residues 263–283 form a helical membrane-spanning segment; sequence LGVAAIPEGLAVVITTCLALG. Val-265, Ala-266, Ile-268, and Glu-270 together coordinate Ca(2+). Over 284–718 the chain is Cytoplasmic; sequence TRKMAAKNAV…GRSIYSNTQQ (435 aa). Catalysis depends on Asp-312, which acts as the 4-aspartylphosphate intermediate. Mg(2+) contacts are provided by Asp-312 and Thr-314. Positions 314, 402, 453, 473, 518, 637, and 643 each coordinate ATP. Asp-662 provides a ligand contact to Mg(2+). An ATP-binding site is contributed by Asn-665. A helical membrane pass occupies residues 719–741; that stretch reads FIRYLISSNIGEVVSIFLTAALG. Ca(2+) is bound by residues Asn-727 and Glu-730. Residues 742–750 are Lumenal-facing; it reads MPEALIPVQ. A helical transmembrane segment spans residues 751-770; sequence LLWVNLVTDGLPATALSFNP. Positions 755, 758, and 759 each coordinate Ca(2+). Topologically, residues 771 to 795 are cytoplasmic; it reads PDHDVMRRAPRKRDEPLVGGWLLFR. A helical membrane pass occupies residues 796-816; sequence YLAIGTYVGAATVFGYIWWFV. The Lumenal segment spans residues 817–854; it reads YNPEGPQISFWQLSHFHKCSAQFPEIGCEMFSNEMSRS. The chain crosses the membrane as a helical span at residues 855-875; that stretch reads ASTVSLSILVVIEMLNAMNAL. Glu-867 provides a ligand contact to Ca(2+). The Cytoplasmic segment spans residues 876 to 891; it reads SSSESLLAFPLWNNMM. A helical transmembrane segment spans residues 892-912; the sequence is LVYAIILSMTLHFAILYIPFL. Residues 913-917 lie on the Lumenal side of the membrane; sequence QTLFS. Residues 918–938 traverse the membrane as a helical segment; the sequence is ILPLNWTEWKAVLAISAPVVA. Residues 939 to 971 are Cytoplasmic-facing; that stretch reads IDELLKYAERRLYTLPAIAGEQQNGVAFKPKKA.

Belongs to the cation transport ATPase (P-type) (TC 3.A.3) family. Mg(2+) is required as a cofactor.

The protein resides in the endoplasmic reticulum membrane. It carries out the reaction Ca(2+)(in) + ATP + H2O = Ca(2+)(out) + ADP + phosphate + H(+). Functionally, magnesium-dependent enzyme catalyzes the hydrolysis of ATP coupled with the translocation of calcium from the cytosol to the endoplasmic reticulum lumen. Its activity is coupled to the unfolded protein response (UPR) and Ca(2+) import into the endoplasmioc reticulum is important for redox homeostasis, virulence, cell wall biosynthesis, and resistance to antifungal compounds that inhibit Ca2+ signaling. With pmrA, promotes radial growth and conidiation. The sequence is that of Endoplasmic reticulum calcium ATPase srcA (srcA) from Aspergillus fumigatus (strain ATCC MYA-4609 / CBS 101355 / FGSC A1100 / Af293) (Neosartorya fumigata).